A 460-amino-acid chain; its full sequence is MSRSLDSARSFLERLEARGGREGAVLAGEFSDIQACSAAWKADGVCSTVAGSRPENVRKNRYKDVLPYDQTRVILSLLQEEGHSDYINGNFIRGVDGSLAYIATQGPLPHTLLDFWRLVWEFGVKVILMACREIENGRKRCERYWAQEQEPLQTGLFCITLIKEKWLNEDIMLRTLKVTFQKESRSVYQLQYMSWPDRGVPSSPDHMLAMVEEARRLQGSGPEPLCVHCSAGCGRTGVLCTVDYVRQLLLTQMIPPDFSLFDVVLKMRKQRPAAVQTEEQYRFLYHTVAQMFCSTLQNASPHYQNIKENCAPLYDDALFLRTPQALLAIPRPPGGVLRSISVPGSPGHAMADTYAVVQKRGAPAGAGSGTQTGTGTGTGARSAEEAPLYSKVTPRAQRPGAHAEDARGTLPGRVPADQSPAGSGAYEDVAGGAQTGGLGFNLRIGRPKGPRDPPAEWTRV.

The 266-residue stretch at leucine 26–methionine 291 folds into the Tyrosine-protein phosphatase domain. Substrate-binding positions include aspartate 197, cysteine 229–arginine 235, and glutamine 276. Catalysis depends on cysteine 229, which acts as the Phosphocysteine intermediate. A disordered region spans residues glycine 361 to valine 460. Residues alanine 364–threonine 378 show a composition bias toward gly residues. Position 389 is a phosphotyrosine (tyrosine 389). Position 393 is a phosphothreonine (threonine 393). Residue tyrosine 426 is modified to Phosphotyrosine. A compositionally biased stretch (basic and acidic residues) spans glycine 449 to valine 460.

It belongs to the protein-tyrosine phosphatase family. Non-receptor class 4 subfamily. Interacts with PSTPIP1. Expressed in brain, colon and several tumor-derived cell lines.

It localises to the nucleus. Its subcellular location is the cytoplasm. The enzyme catalyses O-phospho-L-tyrosyl-[protein] + H2O = L-tyrosyl-[protein] + phosphate. Functionally, differentially dephosphorylate autophosphorylated tyrosine kinases which are known to be overexpressed in tumor tissues. In Homo sapiens (Human), this protein is Tyrosine-protein phosphatase non-receptor type 18 (PTPN18).